A 240-amino-acid chain; its full sequence is Type II restriction enzyme DdeI (240 aa).

The catalysed reaction is Endonucleolytic cleavage of DNA to give specific double-stranded fragments with terminal 5'-phosphates.. A P subtype restriction enzyme that recognizes the double-stranded sequence 5'-CTNAG-3' and cleaves after C-1. This Desulfomicrobium norvegicum (strain DSM 1741 / NCIMB 8310) (Desulfovibrio baculatus (strain Norway 4)) protein is Type II restriction enzyme DdeI (ddeIR).